The primary structure comprises 194 residues: Ion-translocating oxidoreductase complex subunit B (194 aa).

The tract at residues Met1–Ser26 is hydrophobic. A 4Fe-4S domain is found at Glu32–Val90. Positions 49, 52, 57, 73, 114, 117, 120, 124, 144, 147, 150, and 154 each coordinate [4Fe-4S] cluster. 2 4Fe-4S ferredoxin-type domains span residues Lys105–Lys134 and Ala135–Val164.

The protein belongs to the 4Fe4S bacterial-type ferredoxin family. RnfB subfamily. In terms of assembly, the complex is composed of six subunits: RnfA, RnfB, RnfC, RnfD, RnfE and RnfG. Requires [4Fe-4S] cluster as cofactor.

It localises to the cell inner membrane. In terms of biological role, part of a membrane-bound complex that couples electron transfer with translocation of ions across the membrane. The protein is Ion-translocating oxidoreductase complex subunit B of Aliivibrio salmonicida (strain LFI1238) (Vibrio salmonicida (strain LFI1238)).